The following is a 171-amino-acid chain: 3-hydroxydecanoyl-[acyl-carrier-protein] dehydratase (171 aa).

His70 is an active-site residue.

The protein belongs to the thioester dehydratase family. FabA subfamily. In terms of assembly, homodimer.

It is found in the cytoplasm. The enzyme catalyses a (3R)-hydroxyacyl-[ACP] = a (2E)-enoyl-[ACP] + H2O. It carries out the reaction (3R)-hydroxydecanoyl-[ACP] = (2E)-decenoyl-[ACP] + H2O. It catalyses the reaction (2E)-decenoyl-[ACP] = (3Z)-decenoyl-[ACP]. The protein operates within lipid metabolism; fatty acid biosynthesis. In terms of biological role, necessary for the introduction of cis unsaturation into fatty acids. Catalyzes the dehydration of (3R)-3-hydroxydecanoyl-ACP to E-(2)-decenoyl-ACP and then its isomerization to Z-(3)-decenoyl-ACP. Can catalyze the dehydratase reaction for beta-hydroxyacyl-ACPs with saturated chain lengths up to 16:0, being most active on intermediate chain length. This Pseudomonas fluorescens (strain Pf0-1) protein is 3-hydroxydecanoyl-[acyl-carrier-protein] dehydratase.